The chain runs to 151 residues: Deoxyuridine 5'-triphosphate nucleotidohydrolase (151 aa).

Substrate-binding positions include Arg-70–Gly-72, Asn-83, Leu-87–Asp-89, and Met-97.

Belongs to the dUTPase family. Requires Mg(2+) as cofactor.

The catalysed reaction is dUTP + H2O = dUMP + diphosphate + H(+). Its pathway is pyrimidine metabolism; dUMP biosynthesis; dUMP from dCTP (dUTP route): step 2/2. Functionally, this enzyme is involved in nucleotide metabolism: it produces dUMP, the immediate precursor of thymidine nucleotides and it decreases the intracellular concentration of dUTP so that uracil cannot be incorporated into DNA. This chain is Deoxyuridine 5'-triphosphate nucleotidohydrolase, found in Glaesserella parasuis serovar 5 (strain SH0165) (Haemophilus parasuis).